We begin with the raw amino-acid sequence, 263 residues long: Proteasome subunit alpha (263 aa).

Residues 229–263 form a disordered region; sequence AALLQDTPPDDADADADAGKKPANDGNLPPNDDKS.

The protein belongs to the peptidase T1A family. As to quaternary structure, the 20S proteasome core is composed of 14 alpha and 14 beta subunits that assemble into four stacked heptameric rings, resulting in a barrel-shaped structure. The two inner rings, each composed of seven catalytic beta subunits, are sandwiched by two outer rings, each composed of seven alpha subunits. The catalytic chamber with the active sites is on the inside of the barrel. Has a gated structure, the ends of the cylinder being occluded by the N-termini of the alpha-subunits. Is capped by the proteasome-associated ATPase, ARC.

It is found in the cytoplasm. The protein operates within protein degradation; proteasomal Pup-dependent pathway. Its activity is regulated as follows. The formation of the proteasomal ATPase ARC-20S proteasome complex, likely via the docking of the C-termini of ARC into the intersubunit pockets in the alpha-rings, may trigger opening of the gate for substrate entry. Interconversion between the open-gate and close-gate conformations leads to a dynamic regulation of the 20S proteasome proteolysis activity. Its function is as follows. Component of the proteasome core, a large protease complex with broad specificity involved in protein degradation. The chain is Proteasome subunit alpha from Actinosynnema mirum (strain ATCC 29888 / DSM 43827 / JCM 3225 / NBRC 14064 / NCIMB 13271 / NRRL B-12336 / IMRU 3971 / 101).